A 187-amino-acid chain; its full sequence is MIVLGVDPGSRKTGYGVIAEAEGRLSVLGCGLIRPAASGTLHERIGQLCSGLEEVIANMKPEAVALETAFVGRNVRSALILGQVRGAVLATVIKLGLPVREYAPREIKLAVTGTGAARKEQVASMLPRLLGLEEAPKPLDVTDALGIAYCDLSRGASLTGHCGMTGSGKSRSKGWAAFVDAHPELLA.

Active-site residues include D7, E67, and D140. The Mg(2+) site is built by D7, E67, and D140.

This sequence belongs to the RuvC family. Homodimer which binds Holliday junction (HJ) DNA. The HJ becomes 2-fold symmetrical on binding to RuvC with unstacked arms; it has a different conformation from HJ DNA in complex with RuvA. In the full resolvosome a probable DNA-RuvA(4)-RuvB(12)-RuvC(2) complex forms which resolves the HJ. Requires Mg(2+) as cofactor.

It localises to the cytoplasm. The enzyme catalyses Endonucleolytic cleavage at a junction such as a reciprocal single-stranded crossover between two homologous DNA duplexes (Holliday junction).. The RuvA-RuvB-RuvC complex processes Holliday junction (HJ) DNA during genetic recombination and DNA repair. Endonuclease that resolves HJ intermediates. Cleaves cruciform DNA by making single-stranded nicks across the HJ at symmetrical positions within the homologous arms, yielding a 5'-phosphate and a 3'-hydroxyl group; requires a central core of homology in the junction. The consensus cleavage sequence is 5'-(A/T)TT(C/G)-3'. Cleavage occurs on the 3'-side of the TT dinucleotide at the point of strand exchange. HJ branch migration catalyzed by RuvA-RuvB allows RuvC to scan DNA until it finds its consensus sequence, where it cleaves and resolves the cruciform DNA. This is Crossover junction endodeoxyribonuclease RuvC from Chlorobaculum parvum (strain DSM 263 / NCIMB 8327) (Chlorobium vibrioforme subsp. thiosulfatophilum).